We begin with the raw amino-acid sequence, 1274 residues long: Myosin-binding protein C, cardiac-type (1274 aa).

N-acetylmethionine is present on Met1. Residues 8–95 (PVSAFTKKPR…SKVKFDLKVT (88 aa)) form the Ig-like C2-type 1 domain. Ser47 is modified (phosphoserine). Residues 95–104 (TEPAPPEKAE) show a composition bias toward basic and acidic residues. A disordered region spans residues 95-153 (TEPAPPEKAESAVAPTSMEAPETPKEVPALATQLEGNVSSPEGSVSVTQDGSVAGSQGA). A Phosphothreonine modification is found at Thr117. Residues 128–149 (LEGNVSSPEGSVSVTQDGSVAG) are compositionally biased toward polar residues. The region spanning 157-259 (PIGLFLMRPQ…KFDSCNFNLT (103 aa)) is the Ig-like C2-type 2 domain. Zn(2+) contacts are provided by Gln212, His214, Glu227, and His229. A Phosphoserine modification is found at Ser279. Thr287 is subject to Phosphothreonine; by PKA and PKC. At Ser288 the chain carries Phosphoserine. Ser307 carries the phosphoserine; by PKA modification. Residues Ser312 and Ser427 each carry the phosphoserine modification. Ig-like C2-type domains lie at 361–452 (KKST…VKEP) and 452–546 (PPVL…KKLE). Cys436 and Cys443 are joined by a disulfide. 2 positions are modified to phosphoserine: Ser459 and Ser550. Thr607 carries the post-translational modification Phosphothreonine. The Ig-like C2-type 5 domain occupies 645-765 (PKIHLDCPGS…PVGEDQVNLT (121 aa)). 2 Fibronectin type-III domains span residues 774–870 (APAA…IGPP) and 872–967 (EPTH…VQEI). Residues 971 to 1059 (PRLQLPRHLR…ENMEDKATLV (89 aa)) form the Ig-like C2-type 6 domain. Positions 1068–1163 (PPLDIRVVET…TKEPIFIPRP (96 aa)) constitute a Fibronectin type-III 3 domain. Residues 1181–1269 (PSFTQPLTNR…GEAQCECRLE (89 aa)) form the Ig-like C2-type 7 domain. Arg1241 carries the omega-N-methylarginine modification.

It belongs to the immunoglobulin superfamily. MyBP family. Substrate for phosphorylation by PKA and PKC. Reversible phosphorylation appears to modulate contraction. In terms of processing, polyubiquitinated.

Functionally, thick filament-associated protein located in the crossbridge region of vertebrate striated muscle a bands. In vitro it binds MHC, F-actin and native thin filaments, and modifies the activity of actin-activated myosin ATPase. It may modulate muscle contraction or may play a more structural role. This chain is Myosin-binding protein C, cardiac-type (Mybpc3), found in Rattus norvegicus (Rat).